A 255-amino-acid polypeptide reads, in one-letter code: U2 small nuclear ribonucleoprotein A' (255 aa).

4 LRR repeats span residues 20–41, 43–64, 65–86, and 89–110; these read RDRE…GATL, QFDA…PLLR, RLKT…LDQA, and CLTE…DPLA. In terms of domain architecture, LRRCT spans 123 to 161; that stretch reads NPVTNKKHYRLYVIYKVPQVRVLDFQKVKLKERQEAEKM. Position 172 is an N6-acetyllysine; alternate (Lys172). Lys172 participates in a covalent cross-link: Glycyl lysine isopeptide (Lys-Gly) (interchain with G-Cter in SUMO2); alternate. Residues 174-201 form a disordered region; it reads IARRSKTFNPGAGLPTDKKKGGPSPGDV. Phosphoserine occurs at positions 178 and 197. Lys221 participates in a covalent cross-link: Glycyl lysine isopeptide (Lys-Gly) (interchain with G-Cter in SUMO2). Residues 222 to 255 form a disordered region; that stretch reads GLLQSGQIPGRERRSGPTDDGEEEMEEDTVTNGS. Ser236 and Ser255 each carry phosphoserine. Over residues 240–255 the composition is skewed to acidic residues; that stretch reads DDGEEEMEEDTVTNGS.

The protein belongs to the U2 small nuclear ribonucleoprotein A family. As to quaternary structure, identified in the spliceosome B complex. Identified in the spliceosome C complex. Found in a pre-mRNA splicing complex with SFRS4, SFRS5, SNRNP70, SNRPA1, SRRM1 and SRRM2. Found in a pre-mRNA exonic splicing enhancer (ESE) complex with SNRNP70, SNRPA1, SRRM1 and TRA2B. Contributes to the binding of stem loop IV of U2 snRNA with SNRPB2.

It is found in the nucleus. Functionally, involved in pre-mRNA splicing as component of the spliceosome. Associated with sn-RNP U2, where it contributes to the binding of stem loop IV of U2 snRNA. The protein is U2 small nuclear ribonucleoprotein A' (SNRPA1) of Homo sapiens (Human).